The chain runs to 132 residues: uncharacterized protein (132 aa).

Transmembrane regions (helical) follow at residues 28-48, 59-79, and 106-126; these read LLRL…LIYP, ILPS…LFSY, and LLVA…VIEI.

It localises to the membrane. This is an uncharacterized protein from Schizosaccharomyces pombe (strain 972 / ATCC 24843) (Fission yeast).